The following is a 408-amino-acid chain: MDVVPCLKVPQRHAQMYRKYLESQGVLDRRYGAEKHSDGTVTLLVVASALPQLDLVALKEHVAHDSFCEIVDIQAQLSKKSKVKSVHMKLVEAARSFLLSKGKEWSEDLGRDIPGRWQCHGDLVLFTEGCFSNAVWKEIGSEFWTAVALTLGVKRIAQIKKISQDGYRTPIVTMLLGDSSHVTHIDNHIRYEFDVTKCMFSSGNITEKLRIASFDCSGETVVDLYAGIGYFTLPYLVHANAAHVHACEWNPDAVAALQRNLEINGVSNRCTVHQGDNRQLSLSDLADRVNLGLIPSSEEGWPVACRLLKRSTGGIMHIHQNVTAPFHHEPSELNSSVEGSSVEVSPLRIQKDMQVWTAWASETAKRICTLLLGITGSEWKTNIRHIEHVKTYAPHISHVVLDLECKPL.

Residues Ser201, Lys208, Glu248, and 276 to 277 contribute to the S-adenosyl-L-methionine site; that span reads DN.

The protein belongs to the class I-like SAM-binding methyltransferase superfamily. TRM5/TYW2 family.

The catalysed reaction is 4-demethylwyosine(37) in tRNA(Phe) + S-adenosyl-L-methionine = 4-demethyl-7-[(3S)-3-amino-3-carboxypropyl]wyosine(37) in tRNA(Phe) + S-methyl-5'-thioadenosine + H(+). Its pathway is tRNA modification; wybutosine-tRNA(Phe) biosynthesis. Its function is as follows. S-adenosyl-L-methionine-dependent transferase that acts as a component of the wybutosine biosynthesis pathway. Wybutosine is a hyper modified guanosine with a tricyclic base found at the 3'-position adjacent to the anticodon of eukaryotic phenylalanine tRNA. Catalyzes the transfer of the alpha-amino-alpha-carboxypropyl (acp) group from S-adenosyl-L-methionine to the C-7 position of 4-demethylwyosine (imG-14) to produce wybutosine-86. This is tRNA wybutosine-synthesizing protein 2 homolog (trmt12) from Danio rerio (Zebrafish).